Reading from the N-terminus, the 975-residue chain is Translation initiation factor IF-2 (975 aa).

Residues 48–63 (DHLRKSHGATDGDKRK) are compositionally biased toward basic and acidic residues. Disordered regions lie at residues 48–84 (DHLR…GKAR) and 96–388 (FVKR…QAPT). The segment covering 104–115 (ETGADQAQAQTD) has biased composition (low complexity). A compositionally biased stretch (basic and acidic residues) spans 120-177 (AELKRREEEARREAELLEKQAQELRERQERLEREEAERRAREEAAEAERRRAEEEAAA). The segment covering 178–211 (KRAAAAQAEAAQQAAAAREQAQRAQSEPAEQSAQ) has biased composition (low complexity). Residues 212-263 (DEARAAAERAAQREAAKKAEDAAREAADKARAEQEEIRKRREAAEAEARAIR) show a composition bias toward basic and acidic residues. Positions 302 to 330 (KPAGEAAAARPAAKKPASGAPAPAAAPAG) are enriched in low complexity. Gly residues predominate over residues 359-372 (SSGGVDRGWRGGPK). Residues 475 to 644 (PRPPVVTVMG…LLQAEVLELK (170 aa)) enclose the tr-type G domain. The G1 stretch occupies residues 484 to 491 (GHVDHGKT). 484–491 (GHVDHGKT) is a binding site for GTP. The G2 stretch occupies residues 509–513 (GITQH). Residues 530-533 (DTPG) are G3. GTP is bound by residues 530–534 (DTPGH) and 584–587 (NKID). Positions 584-587 (NKID) are G4. Residues 620–622 (SAK) are G5.

The protein belongs to the TRAFAC class translation factor GTPase superfamily. Classic translation factor GTPase family. IF-2 subfamily.

It is found in the cytoplasm. Functionally, one of the essential components for the initiation of protein synthesis. Protects formylmethionyl-tRNA from spontaneous hydrolysis and promotes its binding to the 30S ribosomal subunits. Also involved in the hydrolysis of GTP during the formation of the 70S ribosomal complex. In Burkholderia pseudomallei (strain 1710b), this protein is Translation initiation factor IF-2.